Consider the following 79-residue polypeptide: Orally active insecticidal peptide (79 aa).

The first 19 residues, 1–19, serve as a signal peptide directing secretion; that stretch reads MRVLFIIAGLALLSVVCYT. A propeptide spanning residues 20–44 is cleaved from the precursor; it reads SEMKERSSFNEVLSEFFAADEPQER. 3 cysteine pairs are disulfide-bonded: Cys-46/Cys-61, Cys-53/Cys-66, and Cys-60/Cys-73. The residue at position 77 (Ala-77) is an Alanine amide.

It belongs to the neurotoxin 03 (Tx2) family. 01 subfamily. As to expression, expressed by the venom gland.

The protein localises to the secreted. In terms of biological role, probable ion channel inhibitor. Shows insecticidal activity when injected into mealworms. The protein is Orally active insecticidal peptide of Selenotypus plumipes (Australian featherleg tarantula).